The primary structure comprises 543 residues: Coiled-coil domain-containing protein 9 (543 aa).

Composition is skewed to basic and acidic residues over residues 38–47 (IEEDRKKAEL) and 59–72 (RSMEKENMAVEEKS). The tract at residues 38-543 (IEEDRKKAEL…SGEAWPFANA (506 aa)) is disordered. Phosphothreonine is present on threonine 94. Residues arginine 106, arginine 120, arginine 126, and arginine 128 each carry the omega-N-methylarginine modification. Residues arginine 129, arginine 131, and arginine 133 each carry the asymmetric dimethylarginine modification. Phosphoserine is present on serine 135. Basic and acidic residues-rich tracts occupy residues 146 to 183 (TSDRKSKEWEERRRQNIEKMNEEMEKIAEYERNQREGV), 192 to 212 (FLDDPRRRGGPLEESERDRRE), and 225 to 239 (DFERVRSGLEQERQG). Positions 147-183 (SDRKSKEWEERRRQNIEKMNEEMEKIAEYERNQREGV) form a coiled coil. Phosphoserine occurs at positions 246 and 253. 4 stretches are compositionally biased toward basic and acidic residues: residues 256–277 (GRERSEYLRWKQEREKIDQERL), 287–300 (WRREWDAEKTDGMF), 309–318 (ELSHRYDDQA), and 359–372 (YSDHDNRWETREEA). Residues serine 374 and serine 384 each carry the phosphoserine modification. A compositionally biased stretch (polar residues) spans 376–394 (APESSQSISLEETPTQASE). Residues 405–453 (EDGEEDVGEEEEGEEEGEDEEDEEWEDVSEDVTEEEEEEEEEFEEDEEG) are compositionally biased toward acidic residues. Residues 422–452 (EDEEDEEWEDVSEDVTEEEEEEEEEFEEDEE) adopt a coiled-coil conformation. Phosphoserine is present on serine 533.

Probable component of the exon junction complex (EJC); the association is RNA-dependent.

In terms of biological role, probable component of the exon junction complex (EJC), a multiprotein complex that associates immediately upstream of the exon-exon junction on mRNAs and serves as a positional landmark for the intron exon structure of genes and directs post-transcriptional processes in the cytoplasm such as mRNA export, nonsense-mediated mRNA decay (NMD) or translation. The chain is Coiled-coil domain-containing protein 9 (Ccdc9) from Mus musculus (Mouse).